Here is a 349-residue protein sequence, read N- to C-terminus: uncharacterized protein (349 aa).

The N-terminal stretch at 1–16 (MLFKISFLALIASALA) is a signal peptide. The Lumenal portion of the chain corresponds to 17 to 326 (MSINSPTNGD…SSSSSSSAAS (310 aa)). Disordered regions lie at residues 115-190 (ASSS…SSYR) and 243-322 (TNGT…SSSS). Low complexity-rich tracts occupy residues 116 to 176 (SSSS…SSRT), 243 to 278 (TNGT…TASG), and 289 to 322 (STND…SSSS). The helical transmembrane segment at 327-347 (LVSQPVGISAVIAFFAVALSL) threads the bilayer. Residues 348 to 349 (TL) are Cytoplasmic-facing.

The protein localises to the endoplasmic reticulum membrane. This is an uncharacterized protein from Schizosaccharomyces pombe (strain 972 / ATCC 24843) (Fission yeast).